Here is a 398-residue protein sequence, read N- to C-terminus: Small ribosomal subunit protein uS3m (398 aa).

The protein belongs to the universal ribosomal protein uS3 family. In terms of assembly, component of the mitochondrial small ribosomal subunit (mt-SSU). Mature yeast 74S mitochondrial ribosomes consist of a small (37S) and a large (54S) subunit. The 37S small subunit contains a 15S ribosomal RNA (15S mt-rRNA) and 34 different proteins. The 54S large subunit contains a 21S rRNA (21S mt-rRNA) and 46 different proteins. uS3m, uS4m and uS5m form the narrow entry site of the mRNA channel.

Its subcellular location is the mitochondrion. Functionally, component of the mitochondrial ribosome (mitoribosome), a dedicated translation machinery responsible for the synthesis of mitochondrial genome-encoded proteins, including at least some of the essential transmembrane subunits of the mitochondrial respiratory chain. The mitoribosomes are attached to the mitochondrial inner membrane and translation products are cotranslationally integrated into the membrane. uS3m is essential for mitochondrial protein synthesis and required for the maturation of small ribosomal subunits. The protein is Small ribosomal subunit protein uS3m (VAR1) of Saccharomyces cerevisiae (strain ATCC 204508 / S288c) (Baker's yeast).